The sequence spans 342 residues: Ribosomal RNA small subunit methyltransferase C (342 aa).

Belongs to the methyltransferase superfamily. RsmC family. As to quaternary structure, monomer.

It localises to the cytoplasm. The enzyme catalyses guanosine(1207) in 16S rRNA + S-adenosyl-L-methionine = N(2)-methylguanosine(1207) in 16S rRNA + S-adenosyl-L-homocysteine + H(+). In terms of biological role, specifically methylates the guanine in position 1207 of 16S rRNA in the 30S particle. The chain is Ribosomal RNA small subunit methyltransferase C from Salmonella newport (strain SL254).